The chain runs to 573 residues: BICD family-like cargo adapter 1 (573 aa).

Residues 67–97 are disordered; sequence ERPSDPGEHPQAEPGSLAEGAGPQPPPSQDP. Basic and acidic residues predominate over residues 68 to 77; the sequence is RPSDPGEHPQ. The short motif at 113–117 is the CC1 box element; it reads AARLG. Residues 118 to 376 adopt a coiled-coil conformation; that stretch reads KALLERNQDM…QLWEAYCQVR (259 aa). Residues 386–412 form a disordered region; that stretch reads DSADSAVSTDSSMDESSETSSAKDVPA. Positions 387–396 are enriched in low complexity; the sequence is SADSAVSTDS. Positions 440 to 525 form a coiled coil; it reads LSVEMTALKE…LEAWQDDMHR (86 aa).

The protein belongs to the BICDR family. Part of a tripartite complex with dynein and dynactin, acts an adapter linking the dynein motor complex and dynactin. Interacts with KIF1C. Interacts with RAB6A and RAB6B; interaction is specific to Rab6.

Its subcellular location is the cytoplasm. It localises to the cytoskeleton. The protein localises to the microtubule organizing center. It is found in the centrosome. Functionally, acts as an adapter protein linking the dynein motor complex to various cargos and converts dynein from a non-processive to a highly processive motor in the presence of dynactin. Facilitates the interaction between dynein and dynactin and activates dynein processivity (the ability to move along a microtubule for a long distance without falling off the track). Predominantly recruits 2 dyneins, which increases both the force and speed of the microtubule motor. Component of secretory vesicle machinery in developing neurons that acts as a regulator of neurite outgrowth. Regulates the secretory vesicle transport by controlling the accumulation of Rab6-containing secretory vesicles in the pericentrosomal region restricting anterograde secretory transport during the early phase of neuronal differentiation, thereby inhibiting neuritogenesis. This Homo sapiens (Human) protein is BICD family-like cargo adapter 1 (BICDL1).